We begin with the raw amino-acid sequence, 138 residues long: Transcription factor Atoh7-b (138 aa).

In terms of domain architecture, bHLH spans 33 to 85 (KRRLAANARERRRMQGLNTAFDSLRKVVPQWGEDKKLSKYETLQMALSYIMAL).

It is found in the nucleus. The protein localises to the perikaryon. The protein resides in the cell projection. Its subcellular location is the axon. In terms of biological role, transcription factor that binds to DNA at the consensus sequence 5'-CAG[GC]TG-3'. Positively regulates the determination of retinal ganglion cell fate and formation of the optic nerve and retino-hypothalamic tract. Required for retinal circadian rhythm photoentrainment. Plays a role in brainstem auditory signaling and binaural processing. Regulates the differentiation of olfactory receptor neurons. During retinal neurogenesis, activates the transcription of several genes such as brn3d, coe3, cbfa2t2, glis2, elrC and xgadd45-gamma. The sequence is that of Transcription factor Atoh7-b from Xenopus laevis (African clawed frog).